The chain runs to 121 residues: UPF0102 protein VP0448 (121 aa).

It belongs to the UPF0102 family.

In Vibrio parahaemolyticus serotype O3:K6 (strain RIMD 2210633), this protein is UPF0102 protein VP0448.